We begin with the raw amino-acid sequence, 228 residues long: U1 small nuclear ribonucleoprotein C-2 (228 aa).

The segment at 4–36 adopts a Matrin-type zinc-finger fold; sequence YYCDYCDTYLTHDSPSVRKQHNAGYKHKANVRT. The segment at 105–228 is disordered; it reads PGVRPPILPA…SYALPSEGNH (124 aa). Pro residues-rich tracts occupy residues 107–156 and 164–175; these read VRPP…PPGS and LPRPPTLPPPTS. Low complexity predominate over residues 178-190; the sequence is PGAPIPNSAAPPA. The span at 196-214 shows a compositional bias: pro residues; sequence PPAPAGPTSGAPPAPPTAP.

The protein belongs to the U1 small nuclear ribonucleoprotein C family. U1 snRNP is composed of the 7 core Sm proteins B/B', D1, D2, D3, E, F and G that assemble in a heptameric protein ring on the Sm site of the small nuclear RNA to form the core snRNP, and at least 3 U1 snRNP-specific proteins U1-70K, U1-A and U1-C. U1-C interacts with U1 snRNA and the 5' splice-site region of the pre-mRNA.

The protein localises to the nucleus. Its function is as follows. Component of the spliceosomal U1 snRNP, which is essential for recognition of the pre-mRNA 5' splice-site and the subsequent assembly of the spliceosome. U1-C is directly involved in initial 5' splice-site recognition for both constitutive and regulated alternative splicing. The interaction with the 5' splice-site seems to precede base-pairing between the pre-mRNA and the U1 snRNA. Stimulates commitment or early (E) complex formation by stabilizing the base pairing of the 5' end of the U1 snRNA and the 5' splice-site region. This chain is U1 small nuclear ribonucleoprotein C-2, found in Sorghum bicolor (Sorghum).